Reading from the N-terminus, the 255-residue chain is Acetyl-coenzyme A carboxylase carboxyl transferase subunit alpha (255 aa).

The CoA carboxyltransferase C-terminal domain maps to 1–235 (MNIAKIVREA…KKELQTELAR (235 aa)).

Belongs to the AccA family. Acetyl-CoA carboxylase is a heterohexamer composed of biotin carboxyl carrier protein (AccB), biotin carboxylase (AccC) and two subunits each of ACCase subunit alpha (AccA) and ACCase subunit beta (AccD).

It is found in the cytoplasm. It catalyses the reaction N(6)-carboxybiotinyl-L-lysyl-[protein] + acetyl-CoA = N(6)-biotinyl-L-lysyl-[protein] + malonyl-CoA. Its pathway is lipid metabolism; malonyl-CoA biosynthesis; malonyl-CoA from acetyl-CoA: step 1/1. In terms of biological role, component of the acetyl coenzyme A carboxylase (ACC) complex. First, biotin carboxylase catalyzes the carboxylation of biotin on its carrier protein (BCCP) and then the CO(2) group is transferred by the carboxyltransferase to acetyl-CoA to form malonyl-CoA. This chain is Acetyl-coenzyme A carboxylase carboxyl transferase subunit alpha, found in Streptococcus pneumoniae (strain CGSP14).